Reading from the N-terminus, the 390-residue chain is Homeobox protein Meis1 (390 aa).

The 85-residue stretch at 108-192 folds into the MEIS N-terminal domain; that stretch reads GGDVCSSESF…IDLVIDDREG (85 aa). The span at 190–202 shows a compositional bias: basic and acidic residues; sequence REGGSKSDSEDVT. A disordered region spans residues 190–279; that stretch reads REGGSKSDSE…KKRHKKRGIF (90 aa). The span at 203-213 shows a compositional bias: polar residues; it reads RSANLTDQPSW. A DNA-binding region (homeobox; TALE-type) is located at residues 272 to 334; sequence RHKKRGIFPK…NARRRIVQPM (63 aa). The interval 299-329 is interaction with DNA; that stretch reads YPSEEQKKQLAQDTGLTILQVNNWFINARRR. The required for transcriptional activation stretch occupies residues 335–390; it reads IDQSNRAVSQGTPYNPDGQPMGGFVMDGQQHMGIRAPGPMSGMGMNMGMEGQWHYM.

Belongs to the TALE/MEIS homeobox family. In terms of assembly, interacts with the N-terminal region of PBX1 to form a heterodimer which binds DNA including a cAMP-responsive sequence in CYP17. Also forms heterodimers with PBX2. Forms heterotrimers with PBX1 or PBX2 and a number of HOX proteins including HOXA9, HOXD4 and HOXD9 where it acts as a non-DNA-binding partner. Also forms heterotrimers with PBX1 and HOX proteins including HOXD9 and HOXD10 where PBX1 is the non-DNA-binding partner. Heterodimer with DLX3. Heterodimer with HOXB13. As to expression, expressed at high levels in the lung with lower levels detected in the heart and brain. Expressed in pancreatic islets (beta-cells and non-beta-cells).

It is found in the nucleus. Its function is as follows. Acts as a transcriptional regulator of PAX6. Also acts as a transcriptional activator of PF4 in complex with PBX1 or PBX2. Required for hematopoiesis, megakaryocyte lineage development and vascular patterning. May function as a cofactor for HOXA7 and HOXA9 in the induction of myeloid leukemias. This is Homeobox protein Meis1 (Meis1) from Mus musculus (Mouse).